The following is a 215-amino-acid chain: Cytochrome b6 (215 aa).

A helical transmembrane segment spans residues 32-52 (IFYCLGGITLTCFLVQVATGF). C35 is a binding site for heme c. Heme b-binding residues include H86 and H100. Transmembrane regions (helical) follow at residues 90 to 110 (ASMM…TGGF), 116 to 136 (LTWV…VTGY), and 186 to 206 (LHTF…FLMI). Residues H187 and H202 each contribute to the heme b site.

The protein belongs to the cytochrome b family. PetB subfamily. As to quaternary structure, the 4 large subunits of the cytochrome b6-f complex are cytochrome b6, subunit IV (17 kDa polypeptide, PetD), cytochrome f and the Rieske protein, while the 4 small subunits are PetG, PetL, PetM and PetN. The complex functions as a dimer. Heme b is required as a cofactor. The cofactor is heme c.

The protein localises to the plastid. The protein resides in the chloroplast thylakoid membrane. Its function is as follows. Component of the cytochrome b6-f complex, which mediates electron transfer between photosystem II (PSII) and photosystem I (PSI), cyclic electron flow around PSI, and state transitions. This Pinus thunbergii (Japanese black pine) protein is Cytochrome b6.